We begin with the raw amino-acid sequence, 325 residues long: Tetraacyldisaccharide 4'-kinase (325 aa).

55–62 (TAGGNGKT) contributes to the ATP binding site.

This sequence belongs to the LpxK family.

The catalysed reaction is a lipid A disaccharide + ATP = a lipid IVA + ADP + H(+). It functions in the pathway glycolipid biosynthesis; lipid IV(A) biosynthesis; lipid IV(A) from (3R)-3-hydroxytetradecanoyl-[acyl-carrier-protein] and UDP-N-acetyl-alpha-D-glucosamine: step 6/6. In terms of biological role, transfers the gamma-phosphate of ATP to the 4'-position of a tetraacyldisaccharide 1-phosphate intermediate (termed DS-1-P) to form tetraacyldisaccharide 1,4'-bis-phosphate (lipid IVA). The chain is Tetraacyldisaccharide 4'-kinase from Salmonella arizonae (strain ATCC BAA-731 / CDC346-86 / RSK2980).